A 59-amino-acid polypeptide reads, in one-letter code: Potassium channel toxin alpha-KTx 1.2 (59 aa).

Positions 1–22 (MKILSVLLLALIICSIIDWSEG) are cleaved as a signal peptide. Gln23 is modified (pyrrolidone carboxylic acid). Intrachain disulfides connect Cys29–Cys50, Cys35–Cys55, and Cys39–Cys57. An interaction with Ca(2+)-activated K(+) channels region spans residues 48 to 55 (GKCMNKKC).

Belongs to the short scorpion toxin superfamily. Potassium channel inhibitor family. Alpha-KTx 01 subfamily. As to expression, expressed by the venom gland.

Its subcellular location is the secreted. Blocks calcium-activated potassium channels (Kd=43 nM on KCa1.1/KCNMA1). Has a potent presynaptic facilitatory action, with less effect on direct muscle stimulation. The protein is Potassium channel toxin alpha-KTx 1.2 of Leiurus hebraeus (Hebrew deathstalker scorpion).